The sequence spans 254 residues: 3-deoxy-manno-octulosonate cytidylyltransferase (254 aa).

It belongs to the KdsB family.

It localises to the cytoplasm. The catalysed reaction is 3-deoxy-alpha-D-manno-oct-2-ulosonate + CTP = CMP-3-deoxy-beta-D-manno-octulosonate + diphosphate. Its pathway is nucleotide-sugar biosynthesis; CMP-3-deoxy-D-manno-octulosonate biosynthesis; CMP-3-deoxy-D-manno-octulosonate from 3-deoxy-D-manno-octulosonate and CTP: step 1/1. It participates in bacterial outer membrane biogenesis; lipopolysaccharide biosynthesis. In terms of biological role, activates KDO (a required 8-carbon sugar) for incorporation into bacterial lipopolysaccharide in Gram-negative bacteria. The polypeptide is 3-deoxy-manno-octulosonate cytidylyltransferase (Polynucleobacter necessarius subsp. necessarius (strain STIR1)).